Reading from the N-terminus, the 282-residue chain is Pantothenate synthetase (282 aa).

Position 30–37 (30–37 (MGYLHEGH)) interacts with ATP. His37 (proton donor) is an active-site residue. Gln61 contacts (R)-pantoate. Gln61 serves as a coordination point for beta-alanine. 147 to 150 (GMKD) lines the ATP pocket. Gln153 serves as a coordination point for (R)-pantoate. ATP-binding positions include Val176 and 184–187 (KSSR).

It belongs to the pantothenate synthetase family. As to quaternary structure, homodimer.

Its subcellular location is the cytoplasm. The enzyme catalyses (R)-pantoate + beta-alanine + ATP = (R)-pantothenate + AMP + diphosphate + H(+). It functions in the pathway cofactor biosynthesis; (R)-pantothenate biosynthesis; (R)-pantothenate from (R)-pantoate and beta-alanine: step 1/1. Its function is as follows. Catalyzes the condensation of pantoate with beta-alanine in an ATP-dependent reaction via a pantoyl-adenylate intermediate. The protein is Pantothenate synthetase of Bacillus cereus (strain ZK / E33L).